Here is a 462-residue protein sequence, read N- to C-terminus: Glycoprotein endo-alpha-1,2-mannosidase (462 aa).

At 1–8 the chain is on the cytoplasmic side; sequence MAKFRRGT. Residues 9 to 29 form a helical; Signal-anchor for type II membrane protein membrane-spanning segment; that stretch reads CIILALFILFIFSLMMGLKML. Residues 30–462 lie on the Lumenal side of the membrane; that stretch reads RPNTATFGAP…YALDHQLPVS (433 aa). Positions 60–462 are catalytic; that stretch reads DFQKSDRINS…YALDHQLPVS (403 aa).

This sequence belongs to the glycosyl hydrolase 99 family. In terms of processing, undergoes proteolytic cleavage in the C-terminal region.

Its subcellular location is the golgi apparatus membrane. The catalysed reaction is N-{alpha-Glc-(1-&gt;3)-alpha-Man-(1-&gt;2)-alpha-Man-(1-&gt;2)-alpha-Man-(1-&gt;3)-[alpha-Man-(1-&gt;2)-alpha-Man-(1-&gt;3)-[alpha-Man-(1-&gt;2)-alpha-Man-(1-&gt;6)]-alpha-Man-(1-&gt;6)]-beta-Man-(1-&gt;4)-beta-GlcNAc-(1-&gt;4)-beta-GlcNAc}-L-asparaginyl-[protein] + H2O = alpha-D-glucosyl-(1-&gt;3)-D-mannopyranose + N(4)-{alpha-D-Man-(1-&gt;2)-alpha-D-Man-(1-&gt;3)-[alpha-D-Man-(1-&gt;2)-alpha-D-Man-(1-&gt;3)-[alpha-D-Man-(1-&gt;2)-alpha-D-Man-(1-&gt;6)]-alpha-D-Man-(1-&gt;6)]-beta-D-Man-(1-&gt;4)-beta-D-GlaNAc-(1-&gt;4)-beta-D-GlcNAc}-L-asparaginyl-[protein] (N-glucan mannose isomer 8A1,2,3B1,2). In Pongo abelii (Sumatran orangutan), this protein is Glycoprotein endo-alpha-1,2-mannosidase (MANEA).